Consider the following 204-residue polypeptide: MVSLKTGILGGTFDPIHTGHLILADEVKNRLGLDEVIFIPTGQPYYKADKTISPAEDRLNMVKLAISDKPYFRVMDIEIKRSGPTYTADTLNDLKTILPEKTELYFMLGWDNLEALPRWHKASEIIRLCRLVAAPRIGQVKPDVDELDDKLPGLQQSLILLSKPEVDISSSLVRERVENGQGVEHLVPAAVASYIKEHNLYCRK.

Belongs to the NadD family.

It carries out the reaction nicotinate beta-D-ribonucleotide + ATP + H(+) = deamido-NAD(+) + diphosphate. The protein operates within cofactor biosynthesis; NAD(+) biosynthesis; deamido-NAD(+) from nicotinate D-ribonucleotide: step 1/1. Functionally, catalyzes the reversible adenylation of nicotinate mononucleotide (NaMN) to nicotinic acid adenine dinucleotide (NaAD). The sequence is that of Probable nicotinate-nucleotide adenylyltransferase from Dehalococcoides mccartyi (strain CBDB1).